Reading from the N-terminus, the 619-residue chain is Enolase 4 (619 aa).

Residues 173 to 184 are compositionally biased toward basic and acidic residues; it reads DKERKELEKSQE. The interval 173–236 is disordered; sequence DKERKELEKS…PPEPPEPVLH (64 aa). Pro residues predominate over residues 188-206; the sequence is PAPPPVTLPPPPPPPPPPP. Glu302 contributes to the substrate binding site. The interval 333-354 is disordered; it reads TLPPPKQETKKGHNGSKRAQPP. Lys497 functions as the Proton acceptor in the catalytic mechanism. Lys548 is a substrate binding site.

This sequence belongs to the enolase family. As to quaternary structure, interacts with ENO1. Isoform 1 and isoform 4 interact with AKAP4. Post-translationally, synthesized as an approximately 70-kDa precursor, which then undergoes proteolytic cleavage to an approximately 60-kDa enzyme; HOATZ associates directly or indirectly with ENO4 to mediate this process before its transport to mature flagella. As to expression, testis-specific. Expressed in spermatids and ependyma (at protein level). Expressed at higher levels in late spermatids than in pachytene spermatocytes. In terms of tissue distribution, expressed at higher levels in pachytene spermatocytes than in late spermatids.

It catalyses the reaction (2R)-2-phosphoglycerate = phosphoenolpyruvate + H2O. It participates in carbohydrate degradation; glycolysis; pyruvate from D-glyceraldehyde 3-phosphate: step 4/5. Its function is as follows. Required for sperm motility, function and male fertility. May be involved in the normal assembly of the sperm fibrous sheath and provides most of the enolase activity in sperm. The protein is Enolase 4 (Eno4) of Mus musculus (Mouse).